The sequence spans 343 residues: MNERSPPRRPATFRLDDPGVVVTEADETARLGRGTIQITPEHDPATLPVPIEAVLPARRGLPWGALFWSGLAGLTLLGVGLGVVHLIEDLFARSESLGFVGLAFAFVTALALAVVIGREAYGLARLATIEKLHQRAAAVLASDDRKESRVIVQDLLKIAHQNPQLARARATLESHTGEIIDGADMIRLAERELMSPLDAEARRLVSSAAQKVSIVTAVSPRAAIDVMFVFVAALRLIRQLAYLYGGRPGALGMIRLLRHVIAHLAITGGMAASDSLVQQMLGHGIAAKLSQRLGEGVLNGLLTARLGLAAIEVTRPLPFAALPPPKLSDLATDLLRKKEDEEE.

3 helical membrane passes run 64-84, 97-117, and 214-234; these read GALF…LGVV, LGFV…VVIG, and IVTA…VAAL.

The protein belongs to the UPF0283 family.

It localises to the cell inner membrane. In Bradyrhizobium diazoefficiens (strain JCM 10833 / BCRC 13528 / IAM 13628 / NBRC 14792 / USDA 110), this protein is UPF0283 membrane protein blr7254.